Reading from the N-terminus, the 835-residue chain is Microcephalin (835 aa).

The BRCT 1 domain maps to 1 to 93; the sequence is MAAPILKDVV…AHIDESLFPA (93 aa). 4 positions are modified to phosphoserine: S279, S287, S296, and S333. Disordered regions lie at residues 313–381 and 419–443; these read PDQK…RRSI and DNLKERYSENLPPESQLPSSPAQLS. T335 carries the phosphothreonine modification. Residues 343–361 show a composition bias toward basic residues; sequence LLIHSRPRSSSVKRKRVSH. Polar residues predominate over residues 434–443; the sequence is QLPSSPAQLS. The residue at position 548 (S548) is a Phosphoserine. The segment at 555-584 is disordered; that stretch reads AVGLKSTQNKGTTSKISNSSEGEAQSEHEP. The segment covering 559 to 577 has biased composition (polar residues); the sequence is KSTQNKGTTSKISNSSEGE. BRCT domains are found at residues 640–730 and 751–833; these read SGRG…PFEL and YRGT…NYLL.

Interacts with CDC27 and maybe other components of the APC/C complex. Interacts with histone variant H2AX under DNA damage conditions. Expressed in fetal brain, liver and kidney.

It is found in the cytoplasm. The protein resides in the cytoskeleton. It localises to the microtubule organizing center. Its subcellular location is the centrosome. Functionally, implicated in chromosome condensation and DNA damage induced cellular responses. May play a role in neurogenesis and regulation of the size of the cerebral cortex. The polypeptide is Microcephalin (Homo sapiens (Human)).